Reading from the N-terminus, the 98-residue chain is Small ribosomal subunit protein bS20 (98 aa).

Belongs to the bacterial ribosomal protein bS20 family.

Its function is as follows. Binds directly to 16S ribosomal RNA. In Parasynechococcus marenigrum (strain WH8102), this protein is Small ribosomal subunit protein bS20.